Consider the following 514-residue polypeptide: Serine/threonine protein phosphatase PstP (514 aa).

At 1 to 302 (MARVTLVLRY…RPRWSGRRLA (302 aa)) the chain is on the cytoplasmic side. Positions 9–238 (RYAARSDRGL…DNVTVVVADV (230 aa)) constitute a PPM-type phosphatase domain. Mn(2+) is bound by residues D38, G39, D118, S160, D191, and D229. The helical transmembrane segment at 303–323 (FVVALVTVLMTAGLLIGRAII) threads the bilayer. Residues 324-514 (RSNYYVADYA…QPGIDCRAAA (191 aa)) are Extracellular-facing. The tract at residues 420–514 (LLPPCPAPRA…QPGIDCRAAA (95 aa)) is disordered. Positions 440–480 (TTSETTEPNVTSSPASPSPTTSASAPTGTTPAIPTSASPAA) are enriched in low complexity.

Mn(2+) serves as cofactor.

The protein localises to the cell membrane. It catalyses the reaction O-phospho-L-seryl-[protein] + H2O = L-seryl-[protein] + phosphate. It carries out the reaction O-phospho-L-threonyl-[protein] + H2O = L-threonyl-[protein] + phosphate. Plays an important role in regulating cell division and growth by reversible phosphorylation signaling. May play important roles in regulating cellular metabolism and signaling pathways, which could mediate the growth and development of the cell. Plays a role in establishing and maintaining infection. This chain is Serine/threonine protein phosphatase PstP (pstP), found in Mycobacterium tuberculosis (strain CDC 1551 / Oshkosh).